The sequence spans 577 residues: Arginine--tRNA ligase (577 aa).

The short motif at 122-132 is the 'HIGH' region element; sequence PNVAKEMHVGH.

Belongs to the class-I aminoacyl-tRNA synthetase family. In terms of assembly, monomer.

Its subcellular location is the cytoplasm. The catalysed reaction is tRNA(Arg) + L-arginine + ATP = L-arginyl-tRNA(Arg) + AMP + diphosphate. In Enterobacter sp. (strain 638), this protein is Arginine--tRNA ligase.